The following is a 664-amino-acid chain: Kinesin-like protein KIF2B (664 aa).

Threonine 125 bears the Phosphothreonine; by PLK1 mark. A coiled-coil region spans residues 149 to 177; the sequence is CLREIEKLQKQREKRRRLQLEIRARRALD. Phosphoserine; by PLK1 is present on serine 204. In terms of domain architecture, Kinesin motor spans 213 to 543; sequence RICVCVRKRP…LRYANRVKEL (331 aa). Residue 303 to 310 coordinates ATP; it reads GQTGSGKT. The disordered stretch occupies residues 583 to 607; the sequence is VQKEEEKESDELTSTKEPAASWSRS. Residues 642–663 adopt a coiled-coil conformation; it reads VLTEIQKKLQLLRDDLQKKSQA.

The protein belongs to the TRAFAC class myosin-kinesin ATPase superfamily. Kinesin family. MCAK/KIF2 subfamily. Phosphorylation at Thr-125 by PLK1 is required for activity in the correction of kinetochore-microtubules attachment errors, while phosphorylation at Ser-204 also by PLK1 is required for the kinetochore localization and activity in prometaphase.

Its subcellular location is the cytoplasm. It is found in the cytoskeleton. It localises to the microtubule organizing center. The protein localises to the centrosome. The protein resides in the spindle. Its subcellular location is the chromosome. It is found in the centromere. It localises to the kinetochore. In terms of biological role, plus end-directed microtubule-dependent motor required for spindle assembly and chromosome movement. Has microtubule depolymerization activity. Plays a role in chromosome congression. This is Kinesin-like protein KIF2B from Rattus norvegicus (Rat).